A 408-amino-acid polypeptide reads, in one-letter code: Serine-rich antigen (408 aa).

A run of 2 repeats spans residues 209–214 and 230–235. The 2 X 6 AA repeats of S-V-A-Q-S-E stretch occupies residues 209–235; sequence SVAQSEEHGSDSMSQSYNTCGSVAQSE.

It belongs to the mycobacterial PPE family.

The sequence is that of Serine-rich antigen (sra) from Mycobacterium leprae (strain TN).